Here is a 129-residue protein sequence, read N- to C-terminus: Ribosome-binding factor A (129 aa).

Belongs to the RbfA family. As to quaternary structure, monomer. Binds 30S ribosomal subunits, but not 50S ribosomal subunits or 70S ribosomes.

It is found in the cytoplasm. Its function is as follows. One of several proteins that assist in the late maturation steps of the functional core of the 30S ribosomal subunit. Associates with free 30S ribosomal subunits (but not with 30S subunits that are part of 70S ribosomes or polysomes). Required for efficient processing of 16S rRNA. May interact with the 5'-terminal helix region of 16S rRNA. This chain is Ribosome-binding factor A, found in Pseudomonas aeruginosa (strain UCBPP-PA14).